The sequence spans 210 residues: Large ribosomal subunit protein bL25 (210 aa).

Residues 191-200 (EAPAEGAAAP) show a composition bias toward low complexity. Residues 191 to 210 (EAPAEGAAAPAPAPAKKGKK) form a disordered region.

It belongs to the bacterial ribosomal protein bL25 family. CTC subfamily. Part of the 50S ribosomal subunit; part of the 5S rRNA/L5/L18/L25 subcomplex. Contacts the 5S rRNA. Binds to the 5S rRNA independently of L5 and L18.

This is one of the proteins that binds to the 5S RNA in the ribosome where it forms part of the central protuberance. The protein is Large ribosomal subunit protein bL25 of Paracidovorax citrulli (strain AAC00-1) (Acidovorax citrulli).